The primary structure comprises 601 residues: Elongation factor 4 (601 aa).

In terms of domain architecture, tr-type G spans Ser7–Lys189. Residues Asp19–Thr24 and Asn136–Asp139 contribute to the GTP site.

Belongs to the TRAFAC class translation factor GTPase superfamily. Classic translation factor GTPase family. LepA subfamily.

It is found in the cell inner membrane. The catalysed reaction is GTP + H2O = GDP + phosphate + H(+). Functionally, required for accurate and efficient protein synthesis under certain stress conditions. May act as a fidelity factor of the translation reaction, by catalyzing a one-codon backward translocation of tRNAs on improperly translocated ribosomes. Back-translocation proceeds from a post-translocation (POST) complex to a pre-translocation (PRE) complex, thus giving elongation factor G a second chance to translocate the tRNAs correctly. Binds to ribosomes in a GTP-dependent manner. The sequence is that of Elongation factor 4 from Afipia carboxidovorans (strain ATCC 49405 / DSM 1227 / KCTC 32145 / OM5) (Oligotropha carboxidovorans).